Consider the following 500-residue polypeptide: L-arabinose isomerase (500 aa).

The Mn(2+) site is built by Glu306, Glu333, His350, and His450.

It belongs to the arabinose isomerase family. In terms of assembly, homohexamer. Mn(2+) is required as a cofactor.

It catalyses the reaction beta-L-arabinopyranose = L-ribulose. It participates in carbohydrate degradation; L-arabinose degradation via L-ribulose; D-xylulose 5-phosphate from L-arabinose (bacterial route): step 1/3. Its function is as follows. Catalyzes the conversion of L-arabinose to L-ribulose. This chain is L-arabinose isomerase, found in Salmonella arizonae (strain ATCC BAA-731 / CDC346-86 / RSK2980).